Here is a 355-residue protein sequence, read N- to C-terminus: Alanine racemase (355 aa).

Lys-37 acts as the Proton acceptor; specific for D-alanine in catalysis. Residue Lys-37 is modified to N6-(pyridoxal phosphate)lysine. Arg-129 provides a ligand contact to substrate. Tyr-251 acts as the Proton acceptor; specific for L-alanine in catalysis. Substrate is bound at residue Met-299.

This sequence belongs to the alanine racemase family. Requires pyridoxal 5'-phosphate as cofactor.

It catalyses the reaction L-alanine = D-alanine. It functions in the pathway amino-acid biosynthesis; D-alanine biosynthesis; D-alanine from L-alanine: step 1/1. Functionally, catalyzes the interconversion of L-alanine and D-alanine. May also act on other amino acids. The protein is Alanine racemase (alr) of Deinococcus geothermalis (strain DSM 11300 / CIP 105573 / AG-3a).